The following is a 59-amino-acid chain: Large ribosomal subunit protein bL32 (59 aa).

This sequence belongs to the bacterial ribosomal protein bL32 family.

This is Large ribosomal subunit protein bL32 from Mesoplasma florum (strain ATCC 33453 / NBRC 100688 / NCTC 11704 / L1) (Acholeplasma florum).